We begin with the raw amino-acid sequence, 565 residues long: MSEHDVESNKKDDGFQSSVTVEMSKDPDSFHEETVEPKPELKEPEPKEPEPKEPERKEPERKEPERKEPERKEPERKVPGRRETQTKETQTTEIERKETKKKRGTNSYCPPQGTINKTITDGAALIALWTLLWALIGQEVLPGGNLFGLVVIFYSAFLGGKILEFIKIPVVPPLPPLIGMLLAGFTIRNVPIIYEFVHIPTTWSSALRNTALTIILVRAGLGLDPQALKHLKGVCLRLSFGPCFLEACSAALFSHFIMNFPWQWGFLLGFVLGAVSPAVVVPNMLMLQENGYGVEKGIPTLLVAASSMDDIVAITGFNTFLSIVFSSGSVISNILSSLRDVLIGVLVGIVMGVFVQYFPSGDQERLTQRRAFLVLSMCISAVLGCQHIGLHGSGGLVTLVLSFMAAKRWAEEKVGIQKIVANTWNVFQPLLFGLVGTEVSVESLESKTIGMCLATLGLALSVRILSTFVLMSFANFRFKEKVFIALSWIPKATVQAVLGPLALETARVMAPHLEGYAKAVMTVAFLAILITAPNGALLIGILGPKILEQSEVTFPLKVELSNFHH.

Composition is skewed to basic and acidic residues over residues 1–14 and 23–86; these read MSEH…KDDG and MSKD…ETQT. A disordered region spans residues 1–112; it reads MSEHDVESNK…RGTNSYCPPQ (112 aa). The next 13 helical transmembrane spans lie at 122-142, 146-166, 167-187, 206-223, 238-258, 266-286, 311-331, 341-361, 371-391, 419-439, 449-469, 482-502, and 523-543; these read GAAL…EVLP, LFGL…LEFI, KIPV…GFTI, ALRN…GLGL, LSFG…HFIM, FLLG…NMLM, IVAI…GSVI, VLIG…FPSG, AFLV…IGLH, IVAN…GTEV, IGMC…STFV, VFIA…GPLA, and VAFL…GILG.

Belongs to the monovalent cation:proton antiporter 1 (CPA1) transporter (TC 2.A.36) family. Testis-specific. Expressed in the spermatids and spermatozoa (at protein level). Specifically present in the principal piece of sperm tail (at protein level).

Its subcellular location is the cell projection. It localises to the cilium. The protein localises to the flagellum membrane. Sperm-specific Na(+)/H(+) exchanger involved in intracellular pH regulation of spermatozoa. Involved in sperm motility and fertility. The chain is Sodium/hydrogen exchanger 9B1 from Mus musculus (Mouse).